We begin with the raw amino-acid sequence, 301 residues long: GTPase Era (301 aa).

Residues 4–173 (KAGFVALIGK…LECISKHLNP (170 aa)) enclose the Era-type G domain. Positions 12-19 (GKPNAGKS) are G1. Residue 12 to 19 (GKPNAGKS) coordinates GTP. The segment at 38-42 (NATRK) is G2. The segment at 64-67 (DTPG) is G3. GTP contacts are provided by residues 64–68 (DTPGL) and 122–125 (SKID). The G4 stretch occupies residues 122–125 (SKID). A G5 region spans residues 152-154 (LSA). In terms of domain architecture, KH type-2 spans 204–280 (LSDEIPYESD…FLNLQVIAQK (77 aa)).

This sequence belongs to the TRAFAC class TrmE-Era-EngA-EngB-Septin-like GTPase superfamily. Era GTPase family. As to quaternary structure, monomer.

Its subcellular location is the cytoplasm. The protein resides in the cell inner membrane. An essential GTPase that binds both GDP and GTP, with rapid nucleotide exchange. Plays a role in 16S rRNA processing and 30S ribosomal subunit biogenesis and possibly also in cell cycle regulation and energy metabolism. This chain is GTPase Era, found in Helicobacter pylori (strain P12).